A 469-amino-acid chain; its full sequence is Pentatricopeptide repeat-containing protein At2g34370, mitochondrial (469 aa).

The transit peptide at 1-65 directs the protein to the mitochondrion; it reads MVRLVCSRIL…QNRSFVQCRR (65 aa). PPR repeat units follow at residues 142–172, 173–207, 208–238, and 244–274; these read DARS…MPKR, NSET…GNKP, DKEI…MYRD, and SMED…MTVE. A type DYW motif region spans residues 375–469; the sequence is DIGFVPATRV…NGVCSCKDYW (95 aa).

Belongs to the PPR family. PCMP-H subfamily.

Its subcellular location is the mitochondrion. The polypeptide is Pentatricopeptide repeat-containing protein At2g34370, mitochondrial (PCMP-H25) (Arabidopsis thaliana (Mouse-ear cress)).